We begin with the raw amino-acid sequence, 123 residues long: Small ribosomal subunit protein uS13 (123 aa).

The interval Pro-97–Lys-123 is disordered. Residues Gln-101–Lys-123 show a composition bias toward basic residues.

This sequence belongs to the universal ribosomal protein uS13 family. As to quaternary structure, part of the 30S ribosomal subunit. Forms a loose heterodimer with protein S19. Forms two bridges to the 50S subunit in the 70S ribosome.

In terms of biological role, located at the top of the head of the 30S subunit, it contacts several helices of the 16S rRNA. In the 70S ribosome it contacts the 23S rRNA (bridge B1a) and protein L5 of the 50S subunit (bridge B1b), connecting the 2 subunits; these bridges are implicated in subunit movement. Contacts the tRNAs in the A and P-sites. The protein is Small ribosomal subunit protein uS13 of Alkaliphilus oremlandii (strain OhILAs) (Clostridium oremlandii (strain OhILAs)).